The sequence spans 163 residues: Putative pre-16S rRNA nuclease (163 aa).

Belongs to the YqgF nuclease family.

The protein resides in the cytoplasm. Its function is as follows. Could be a nuclease involved in processing of the 5'-end of pre-16S rRNA. This chain is Putative pre-16S rRNA nuclease, found in Zymomonas mobilis subsp. mobilis (strain ATCC 31821 / ZM4 / CP4).